We begin with the raw amino-acid sequence, 717 residues long: F-box only protein 42 (717 aa).

A compositionally biased stretch (acidic residues) spans 1-30; that stretch reads MASSSDSEDDSFMAVDQEETVLEGTMEQDE. The segment at 1–47 is disordered; sequence MASSSDSEDDSFMAVDQEETVLEGTMEQDEEPHPVLEAEETRHNRSM. Residues 31–43 are compositionally biased toward basic and acidic residues; sequence EPHPVLEAEETRH. The F-box domain maps to 44–93; that stretch reads NRSMSELPEEVLEYILSFLSPYQEHKTAALVCKQWYRLIKGVAHQCYHGF. Kelch repeat units follow at residues 132 to 184, 186 to 242, 244 to 293, and 295 to 342; these read SMYV…VYKD, LVLF…VIDD, MIVF…VIDD, and TILI…LWCH. Disordered stretches follow at residues 361–472 and 508–539; these read RAPL…SAAE and PASS…GVHT. The segment covering 363 to 376 has biased composition (low complexity); it reads PLSPSLNSRPSPIS. Residues Ser-365 and Ser-373 each carry the phosphoserine modification. Position 378 is a phosphothreonine (Thr-378). Composition is skewed to polar residues over residues 416 to 426 and 455 to 469; these read QRQTPSGSREG and SLDS…STPS. Phosphoserine is present on Ser-552. Residues 570-596 show a composition bias toward low complexity; sequence GPSASAALSPPLGSSPGSPGSQSLSSG. The disordered stretch occupies residues 570–635; it reads GPSASAALSP…PQSLNVGKPL (66 aa).

As to quaternary structure, component of some SCF complex, composed of CUL1, SKP1, RBX1 and FBXO42. Interacts (via the kelch domain) with p53/TP53; interaction is direct.

Substrate-recognition component of some SCF (SKP1-CUL1-F-box protein)-type E3 ubiquitin ligase complex. Specifically recognizes p53/TP53, promoting its ubiquitination and degradation. This chain is F-box only protein 42 (FBXO42), found in Pongo abelii (Sumatran orangutan).